Consider the following 133-residue polypeptide: UPF0102 protein ABSDF1354 (133 aa).

It belongs to the UPF0102 family.

The polypeptide is UPF0102 protein ABSDF1354 (Acinetobacter baumannii (strain SDF)).